A 267-amino-acid polypeptide reads, in one-letter code: Translation initiation factor 2 subunit alpha (267 aa).

In terms of domain architecture, S1 motif spans 12 to 83 (GELVVATVKE…RKKQVDVSLK (72 aa)).

Belongs to the eIF-2-alpha family. In terms of assembly, heterotrimer composed of an alpha, a beta and a gamma chain.

Functionally, eIF-2 functions in the early steps of protein synthesis by forming a ternary complex with GTP and initiator tRNA. This is Translation initiation factor 2 subunit alpha from Hyperthermus butylicus (strain DSM 5456 / JCM 9403 / PLM1-5).